A 709-amino-acid polypeptide reads, in one-letter code: DNA ligase (709 aa).

The interval 1–20 (MTATHRGAQADASAPAGPLP) is disordered. NAD(+) is bound by residues 52-56 (DAEYD), 101-102 (SL), and Glu-146. Catalysis depends on Lys-148, which acts as the N6-AMP-lysine intermediate. NAD(+) contacts are provided by Arg-169, Glu-205, Lys-322, and Lys-346. Cys-440, Cys-443, Cys-458, and Cys-464 together coordinate Zn(2+). The region spanning 623-709 (KAPAPLSGKT…AEAGAAPAQE (87 aa)) is the BRCT domain.

This sequence belongs to the NAD-dependent DNA ligase family. LigA subfamily. It depends on Mg(2+) as a cofactor. The cofactor is Mn(2+).

The catalysed reaction is NAD(+) + (deoxyribonucleotide)n-3'-hydroxyl + 5'-phospho-(deoxyribonucleotide)m = (deoxyribonucleotide)n+m + AMP + beta-nicotinamide D-nucleotide.. Functionally, DNA ligase that catalyzes the formation of phosphodiester linkages between 5'-phosphoryl and 3'-hydroxyl groups in double-stranded DNA using NAD as a coenzyme and as the energy source for the reaction. It is essential for DNA replication and repair of damaged DNA. This is DNA ligase from Cupriavidus necator (strain ATCC 17699 / DSM 428 / KCTC 22496 / NCIMB 10442 / H16 / Stanier 337) (Ralstonia eutropha).